A 132-amino-acid polypeptide reads, in one-letter code: Small ribosomal subunit protein uS8 (132 aa).

The protein belongs to the universal ribosomal protein uS8 family. In terms of assembly, part of the 30S ribosomal subunit. Contacts proteins S5 and S12.

One of the primary rRNA binding proteins, it binds directly to 16S rRNA central domain where it helps coordinate assembly of the platform of the 30S subunit. This is Small ribosomal subunit protein uS8 from Cereibacter sphaeroides (strain ATCC 17029 / ATH 2.4.9) (Rhodobacter sphaeroides).